A 155-amino-acid polypeptide reads, in one-letter code: 6,7-dimethyl-8-ribityllumazine synthase (155 aa).

Residues Phe-24, Ala-58–Glu-60, and Val-82–Ile-84 contribute to the 5-amino-6-(D-ribitylamino)uracil site. Ser-87–Thr-88 is a (2S)-2-hydroxy-3-oxobutyl phosphate binding site. Catalysis depends on His-90, which acts as the Proton donor. Position 115 (Phe-115) interacts with 5-amino-6-(D-ribitylamino)uracil. Arg-129 serves as a coordination point for (2S)-2-hydroxy-3-oxobutyl phosphate.

This sequence belongs to the DMRL synthase family.

The enzyme catalyses (2S)-2-hydroxy-3-oxobutyl phosphate + 5-amino-6-(D-ribitylamino)uracil = 6,7-dimethyl-8-(1-D-ribityl)lumazine + phosphate + 2 H2O + H(+). It participates in cofactor biosynthesis; riboflavin biosynthesis; riboflavin from 2-hydroxy-3-oxobutyl phosphate and 5-amino-6-(D-ribitylamino)uracil: step 1/2. Functionally, catalyzes the formation of 6,7-dimethyl-8-ribityllumazine by condensation of 5-amino-6-(D-ribitylamino)uracil with 3,4-dihydroxy-2-butanone 4-phosphate. This is the penultimate step in the biosynthesis of riboflavin. The protein is 6,7-dimethyl-8-ribityllumazine synthase of Chlorobium chlorochromatii (strain CaD3).